Here is a 362-residue protein sequence, read N- to C-terminus: Probable peptidyl-prolyl cis-trans isomerase C27F1.06c (362 aa).

A Phosphoserine modification is found at Ser-69. The interval 144–274 is disordered; that stretch reads DEFSSDEEEM…KVKGDGPAAK (131 aa). Composition is skewed to acidic residues over residues 146-167 and 175-189; these read FSSD…EEEE and LNSD…EEEI. The residue at position 177 (Ser-177) is a Phosphoserine. Basic and acidic residues predominate over residues 190–218; sequence LEKPVPKDEVAEKHSKDKLKKEEKEKKTA. One can recognise a PPIase FKBP-type domain in the interval 276 to 362; that stretch reads KKRVSMRYIG…VFDVKLLAVN (87 aa).

This sequence belongs to the FKBP-type PPIase family. FKBP3/4 subfamily.

The enzyme catalyses [protein]-peptidylproline (omega=180) = [protein]-peptidylproline (omega=0). Its function is as follows. PPIases accelerate the folding of proteins. It catalyzes the cis-trans isomerization of proline imidic peptide bonds in oligopeptides. The chain is Probable peptidyl-prolyl cis-trans isomerase C27F1.06c from Schizosaccharomyces pombe (strain 972 / ATCC 24843) (Fission yeast).